The sequence spans 363 residues: Galactokinase (363 aa).

16–19 is a binding site for substrate; sequence EHTD. Residues Ser-50 and 103–109 contribute to the ATP site; that span reads GSGLSSS. Positions 109 and 141 each coordinate Mg(2+). Catalysis depends on Asp-153, which acts as the Proton acceptor. Tyr-205 contributes to the substrate binding site.

This sequence belongs to the GHMP kinase family. GalK subfamily.

The protein resides in the cytoplasm. It catalyses the reaction alpha-D-galactose + ATP = alpha-D-galactose 1-phosphate + ADP + H(+). It participates in carbohydrate metabolism; galactose metabolism. Catalyzes the transfer of the gamma-phosphate of ATP to D-galactose to form alpha-D-galactose-1-phosphate (Gal-1-P). In Mycobacterium bovis (strain ATCC BAA-935 / AF2122/97), this protein is Galactokinase.